We begin with the raw amino-acid sequence, 152 residues long: MAITYSSKPSKQRKALFNMPLHLRHKLFNAPLSKELREKYGVKKLPVRKGDVVRIMRGDWKGHEGKVVRIDLRRVRLYVEGVQRKKADQTPVYYPIHPSKVMIIKLDLSDKWRRKIIERRKGLIESEVVEEKETSKTSEGGGKTIEETEGEK.

The tract at residues 128-152 is disordered; it reads VVEEKETSKTSEGGGKTIEETEGEK.

It belongs to the universal ribosomal protein uL24 family. As to quaternary structure, part of the 50S ribosomal subunit.

One of two assembly initiator proteins, it binds directly to the 5'-end of the 23S rRNA, where it nucleates assembly of the 50S subunit. Functionally, located at the polypeptide exit tunnel on the outside of the subunit. This is Large ribosomal subunit protein uL24 from Staphylothermus marinus (strain ATCC 43588 / DSM 3639 / JCM 9404 / F1).